Reading from the N-terminus, the 588-residue chain is Protein kintoun (588 aa).

Disordered regions lie at residues Pro199–Ser223, Pro338–Glu498, and Ala510–Asp535. Residues Glu202–Leu212 show a composition bias toward basic and acidic residues. Residues Pro350–Gln361 show a composition bias toward polar residues. 2 stretches are compositionally biased toward basic and acidic residues: residues Thr362 to Gly382 and Gln393 to Leu433. Over residues Asp435–Thr447 the composition is skewed to polar residues. The segment covering Lys448–Leu460 has biased composition (basic and acidic residues).

The protein belongs to the PIH1 family. Kintoun subfamily.

The protein localises to the cytoplasm. It localises to the dynein axonemal particle. In terms of biological role, required for cytoplasmic pre-assembly of axonemal dyneins, thereby playing a central role in motility in cilia and flagella. Involved in pre-assembly of dynein arm complexes in the cytoplasm before intraflagellar transport loads them for the ciliary compartment. This is Protein kintoun from Oryzias latipes (Japanese rice fish).